Consider the following 499-residue polypeptide: Probable lipid II flippase MurJ (499 aa).

Transmembrane regions (helical) follow at residues 4–24 (LFRA…FGYV), 26–46 (DATV…FIAF), 88–108 (LLIT…EEII), 130–150 (FTIL…ILLV), 154–174 (FFVP…SLVI), 184–204 (LALA…FLLF), 227–247 (FLFT…DTFL), 265–285 (IYLL…LALV), 297–317 (TALK…FFLS), 335–355 (LFYT…YSLQ), 375–395 (AFLS…LLNF), 396–416 (GVYS…VYLY), 425–445 (IPFG…GLVY), and 455–475 (FILV…LIIL).

Belongs to the MurJ/MviN family.

It is found in the cell inner membrane. Its pathway is cell wall biogenesis; peptidoglycan biosynthesis. In terms of biological role, involved in peptidoglycan biosynthesis. Transports lipid-linked peptidoglycan precursors from the inner to the outer leaflet of the cytoplasmic membrane. This Aquifex aeolicus (strain VF5) protein is Probable lipid II flippase MurJ.